Here is a 302-residue protein sequence, read N- to C-terminus: Probable movement protein 4b (302 aa).

Transports viral genome to neighboring plant cells directly through plasmosdesmata, without any budding. The movement protein allows efficient cell to cell propagation, by bypassing the host cell wall barrier. The protein is Probable movement protein 4b (4b) of Embergeria (Garden lettuce).